Consider the following 379-residue polypeptide: Transcription factor bHLH122 (379 aa).

Basic and acidic residues predominate over residues 1–17 (MESEFQQHHFLLHDHQH). Residues 1-21 (MESEFQQHHFLLHDHQHQRPR) form a disordered region. The residue at position 74 (Ser-74) is a Phosphoserine. 3 disordered regions span residues 79-98 (TFNSDGTEKKPPEVKTEDED), 133-156 (SVSRNKRPREKDDRTPVNNLARHN), and 190-286 (TSNT…MSLP). Over residues 84 to 93 (GTEKKPPEVK) the composition is skewed to basic and acidic residues. Over residues 190–200 (TSNTEASSLTP) the composition is skewed to polar residues. 2 positions are modified to phosphoserine: Ser-213 and Ser-234. Positions 235–261 (GGFNRSFGNEGSASSKLTALARTQSGG) are enriched in polar residues. Basic and acidic residues predominate over residues 265–274 (YKTKDEDSAS). The bHLH domain occupies 310-360 (CATHPRSIAERVRRTKISERMRKLQDLVPNMDTQTNTADMLDLAVQYIKDL).

Homodimer.

It is found in the nucleus. The polypeptide is Transcription factor bHLH122 (BHLH122) (Arabidopsis thaliana (Mouse-ear cress)).